A 170-amino-acid chain; its full sequence is tRNA-splicing endonuclease (170 aa).

Active-site residues include Tyr110, His116, and Lys147.

It belongs to the tRNA-intron endonuclease family. Archaeal short subfamily. In terms of assembly, homotetramer; although the tetramer contains four active sites, only two participate in the cleavage. Therefore, it should be considered as a dimer of dimers.

It catalyses the reaction pretRNA = a 3'-half-tRNA molecule with a 5'-OH end + a 5'-half-tRNA molecule with a 2',3'-cyclic phosphate end + an intron with a 2',3'-cyclic phosphate and a 5'-hydroxyl terminus.. Endonuclease that removes tRNA introns. Cleaves pre-tRNA at the 5'- and 3'-splice sites to release the intron. The products are an intron and two tRNA half-molecules bearing 2',3' cyclic phosphate and 5'-OH termini. Recognizes a pseudosymmetric substrate in which 2 bulged loops of 3 bases are separated by a stem of 4 bp. The polypeptide is tRNA-splicing endonuclease (Pyrococcus furiosus (strain ATCC 43587 / DSM 3638 / JCM 8422 / Vc1)).